A 249-amino-acid chain; its full sequence is ATP synthase subunit a (249 aa).

5 helical membrane-spanning segments follow: residues 35-55, 92-112, 131-151, 187-209, and 221-241; these read ILLTSWFVIALILLAAFISSL, VPFIGTLFLFIFVSNWSGALV, INTTVALALLTSIAYFYAGIS, LFGNILADELVVGVLVLLVPLFI, and SAIQALIFATLAANYIGEALE.

The protein belongs to the ATPase A chain family. As to quaternary structure, F-type ATPases have 2 components, CF(1) - the catalytic core - and CF(0) - the membrane proton channel. CF(1) has five subunits: alpha(3), beta(3), gamma(1), delta(1), epsilon(1). CF(0) has four main subunits: a, b, b' and c.

Its subcellular location is the cellular thylakoid membrane. Functionally, key component of the proton channel; it plays a direct role in the translocation of protons across the membrane. This is ATP synthase subunit a from Trichodesmium erythraeum (strain IMS101).